We begin with the raw amino-acid sequence, 885 residues long: DNA replication licensing factor REC (885 aa).

The tract at residues 36-76 (RVIPAGGNRQPNQGEPGAPDAPSVPPATRQPRGWSRTAGKR) is disordered. A C4-type zinc finger spans residues 281–308 (CSRCQMEIAMRQRGTFQPRPYQCKRSEC). Positions 430 to 627 (SFKLLVQSIA…ERDMSLTAHV (198 aa)) constitute an MCM domain. 473–480 (GDPGIGKT) contributes to the ATP binding site. A compositionally biased stretch (polar residues) spans 796–805 (SLKEGSSRQG). Positions 796–818 (SLKEGSSRQGTRGGGGAGGGAGK) are disordered. Residues 806-817 (TRGGGGAGGGAG) are compositionally biased toward gly residues.

Belongs to the MCM family.

Its subcellular location is the nucleus. Its function is as follows. Required for meiotic DNA recombination in females. Probably not involved in DNA repair and recombination in somatic cells. The protein is DNA replication licensing factor REC (rec) of Drosophila melanogaster (Fruit fly).